We begin with the raw amino-acid sequence, 391 residues long: Tyrosinase-like protein phomQ2 (391 aa).

The disordered stretch occupies residues 1 to 21 (MDNVGCEASSSRDPKGKKAVG). A helical transmembrane segment spans residues 61 to 81 (IRGFICATIIFVVCLGALSYI). N-linked (GlcNAc...) asparagine glycans are attached at residues Asn-97 and Asn-141. Residues His-160 and His-169 each coordinate Cu cation. Residues Asn-204, Asn-246, and Asn-261 are each glycosylated (N-linked (GlcNAc...) asparagine). Cu cation-binding residues include His-298 and His-324. Asn-353 is a glycosylation site (N-linked (GlcNAc...) asparagine).

The protein belongs to the tyrosinase family. Requires Cu(2+) as cofactor.

Its subcellular location is the membrane. It participates in mycotoxin biosynthesis. In terms of biological role, tyrosinase-like protein; part of the gene cluster that mediates the biosynthesis of the phomopsins, a group of hexapeptide mycotoxins which infects lupins and causes lupinosis disease in livestock. Within the pathway, phomQ2 is involved in the generation of the common 13-membered macrocycle, possibly by catalyzing the hydroxylation of Tyr. The pathway starts with the processing of the precursor phomA by several endopeptidases including kexin proteases as well as the cluster-specific S41 family peptidase phomP1 and the oligopeptidase phomG to produce 10 identical copies of the hexapeptide Tyr-Val-Ile-Pro-Ile-Asp. After being excised from the precursor peptide, the core peptides are cyclized and modified post-translationally by enzymes encoded within the gene cluster. The timing and order of proteolysis of the phomA precursor and PTMs are still unknown. Two tyrosinase-like enzymes, phomQ1 and phomQ2, catalyze the chlorination and hydroxylation of Tyr, respectively. PhomYb, is proposed to be involved in the construction of the macrocyclic structure. The other 4 ustYa family proteins may be involved in PTMs that generate the unique structure of phomopsin A. PhomYa is required for the hydroxylation of C-beta of Tyr. PhomYc, phomYd, and phomYe are responsible for the biosynthesis of 2,3-dehydroisoleucine (dIle), 2,3-dehydroaspartic acid (dAsp), and 3,4-dehydroproline (dPro), respectively. While dIle formation by phomYc is indispensable for the installation of dAsp by phomYd, the order of the other PTMs have not been elucidated yet. Most of the biosynthetic enzymes likely have broad substrate specificity, and thus, there might be a metabolic grid from a precursor to phomopsin A. The enzyme(s) responsible for the biosynthesis of 3,4-dehydrovaline (dVal) have also not been identified yet. Finally, phomM acts as an S-adenosylmethionine-dependent alpha-N-methyltransferase that catalyzes two successive N-methylation reactions, converting N-desmethyl-phomopsin A to phomopsin A and phomopsin A further to an N,N-dimethylated congener called phomopsin E. The chain is Tyrosinase-like protein phomQ2 from Diaporthe leptostromiformis (Lupinosis disease fungus).